A 493-amino-acid chain; its full sequence is Farnesoate epoxidase (493 aa).

Positions 1 to 24 are cleaved as a signal peptide; sequence MLALIVLCFILFFYIISRRHRGLC. Position 433 (Cys-433) interacts with heme.

It belongs to the cytochrome P450 family. Heme is required as a cofactor. As to expression, constitutively expressed in corpora allata from the first instar larval to adult stages.

The enzyme catalyses (2E,6E)-farnesoate + reduced [NADPH--hemoprotein reductase] + O2 = juvenile hormone III carboxylate + oxidized [NADPH--hemoprotein reductase] + H2O + H(+). Functionally, catalyzes the conversion of farnesoate to juvenile hormone III acid in juvenile hormone biosynthesis. This Bombyx mori (Silk moth) protein is Farnesoate epoxidase.